A 417-amino-acid polypeptide reads, in one-letter code: RH-like protein IIR (417 aa).

11 helical membrane-spanning segments follow: residues 12 to 32 (CLPL…YFFT), 44 to 64 (LVAS…GFGF), 77 to 97 (VAFS…LDGF), 125 to 145 (ISVD…MVLV), 172 to 192 (IYVF…KPLP), 203 to 223 (TIPS…WPSF), 238 to 258 (VFNT…GSSL), 265 to 285 (ISMS…GTSC), 287 to 307 (LIPS…ISVG), 331 to 351 (NFSW…VRHT), and 358 to 378 (MIGF…TIAL).

It belongs to the ammonium transporter (TC 2.A.49) family. Rh subfamily.

It is found in the membrane. Its function is as follows. May be part of an oligomeric complex which is likely to have a transport or channel function in the erythrocyte membrane. The chain is RH-like protein IIR from Pan troglodytes (Chimpanzee).